A 147-amino-acid chain; its full sequence is Hordoindoline-B1 (147 aa).

The N-terminal stretch at 1 to 19 (MKTLFLLAILALVASTTFA) is a signal peptide. The propeptide occupies 20–28 (QYSVGGGYN).

Post-translationally, five disulfide bonds are present. Found in endosperm and aleurone layer of developing kernels, but not in the embryo.

It localises to the membrane. The protein localises to the secreted. It is found in the extracellular space. Its function is as follows. Acts as a membranotoxin, probably through its antibacterial and antifungal activities, contributing to the defense mechanism of the plant against predators. Forms monovalent cation-selective ion channels in membranes. Contributes to grain texture and hardness. This is Hordoindoline-B1 (HINB-1) from Hordeum vulgare (Barley).